Consider the following 901-residue polypeptide: Inner capsid protein VP3 (901 aa).

Belongs to the turreted BTV-fold inner capsid family. Homodecamer; each decamer is made up of two conformers of VP2, called VP2A and VP2B. 12 homodecamers assemble to form an icosahedral capsid.

It is found in the virion. In terms of biological role, inner capsid protein that self-assembles to form an icosahedral capsid with a T=2 symmetry, which consists of 120 copies of VP2, with channels at each of its five-fold vertices. This capsid constitutes the innermost concentric layer of the viral mature particle. The polypeptide is Inner capsid protein VP3 (Segment-3) (Bluetongue virus 13 (isolate USA) (BTV 13)).